Consider the following 440-residue polypeptide: Kinetochore protein NUF2 homolog (440 aa).

Coiled coils occupy residues 142 to 239 (LGLL…LRSQ) and 299 to 386 (INEQ…RQTN).

Belongs to the NUF2 family. As to quaternary structure, component of the NDC80 complex, which consists of NDC80, NUF2, SPC24 and SPC25.

The protein resides in the chromosome. It is found in the centromere. Acts as a component of the essential kinetochore-associated NDC80 complex, which is required for chromosome segregation and spindle checkpoint activity to ensure proper cell division. The protein is Kinetochore protein NUF2 homolog of Arabidopsis thaliana (Mouse-ear cress).